The following is a 138-amino-acid chain: Phosphoribosyl-AMP cyclohydrolase (138 aa).

A Mg(2+)-binding site is contributed by Asp-84. Cys-85 is a Zn(2+) binding site. 2 residues coordinate Mg(2+): Asp-86 and Asp-88. Zn(2+)-binding residues include Cys-102 and Cys-109.

This sequence belongs to the PRA-CH family. As to quaternary structure, homodimer. Mg(2+) is required as a cofactor. It depends on Zn(2+) as a cofactor.

The protein resides in the cytoplasm. It catalyses the reaction 1-(5-phospho-beta-D-ribosyl)-5'-AMP + H2O = 1-(5-phospho-beta-D-ribosyl)-5-[(5-phospho-beta-D-ribosylamino)methylideneamino]imidazole-4-carboxamide. Its pathway is amino-acid biosynthesis; L-histidine biosynthesis; L-histidine from 5-phospho-alpha-D-ribose 1-diphosphate: step 3/9. Functionally, catalyzes the hydrolysis of the adenine ring of phosphoribosyl-AMP. The polypeptide is Phosphoribosyl-AMP cyclohydrolase (Burkholderia pseudomallei (strain K96243)).